The following is a 517-amino-acid chain: Maturase K (517 aa).

The protein belongs to the intron maturase 2 family. MatK subfamily.

Its subcellular location is the plastid. The protein localises to the chloroplast. Functionally, usually encoded in the trnK tRNA gene intron. Probably assists in splicing its own and other chloroplast group II introns. This chain is Maturase K, found in Palhinhaea cernua (Nodding clubmoss).